Reading from the N-terminus, the 311-residue chain is Mediator of RNA polymerase II transcription subunit 27 (311 aa).

This sequence belongs to the Mediator complex subunit 27 family. In terms of assembly, component of the Mediator complex.

The protein localises to the nucleus. Functionally, component of the Mediator complex, a coactivator involved in the regulated transcription of nearly all RNA polymerase II-dependent genes. Mediator functions as a bridge to convey information from gene-specific regulatory proteins to the basal RNA polymerase II transcription machinery. Mediator is recruited to promoters by direct interactions with regulatory proteins and serves as a scaffold for the assembly of a functional preinitiation complex with RNA polymerase II and the general transcription factors. In Xenopus tropicalis (Western clawed frog), this protein is Mediator of RNA polymerase II transcription subunit 27 (med27).